Consider the following 114-residue polypeptide: 11.9 kDa wall protein (114 aa).

Residues 1–6 (MSFKTR) constitute a propeptide that is removed on maturation.

Its subcellular location is the secreted. The protein localises to the cell wall. Its function is as follows. May play a role in the structure of the hypha-forming fruit bodies. The protein is 11.9 kDa wall protein (TDF-1) of Tuber dryophilum (Truffle).